A 687-amino-acid polypeptide reads, in one-letter code: Immune inhibitor A (687 aa).

Residues 1 to 12 (MKDAKADTKEKL) show a composition bias toward basic and acidic residues. A signal peptide (or 32) is located at residues 1 to 25 (MKDAKADTKEKLNQPATGTPAATGP). Residues 1–43 (MKDAKADTKEKLNQPATGTPAATGPVKGGLNGKVPTSPAKQKA) are disordered. The propeptide occupies 26–40 (VKGGLNGKVPTSPAK). Residue histidine 266 coordinates Zn(2+). Glutamate 267 is a catalytic residue. Histidine 270 is a binding site for Zn(2+).

This sequence belongs to the peptidase M6 family. Zn(2+) serves as cofactor. Ca(2+) is required as a cofactor.

It localises to the secreted. Neutral metalloprotease that is secreted to degrade antibacterial proteins produced by the insect host for its defense (attacins and cecropins). Probably degrades some unknown crucial protein(s) too, since it is toxic when injected to insect larvae. The protein is Immune inhibitor A (ina) of Bacillus thuringiensis subsp. alesti.